A 95-amino-acid chain; its full sequence is Aspartyl/glutamyl-tRNA(Asn/Gln) amidotransferase subunit C (95 aa).

This sequence belongs to the GatC family. As to quaternary structure, heterotrimer of A, B and C subunits.

It carries out the reaction L-glutamyl-tRNA(Gln) + L-glutamine + ATP + H2O = L-glutaminyl-tRNA(Gln) + L-glutamate + ADP + phosphate + H(+). It catalyses the reaction L-aspartyl-tRNA(Asn) + L-glutamine + ATP + H2O = L-asparaginyl-tRNA(Asn) + L-glutamate + ADP + phosphate + 2 H(+). In terms of biological role, allows the formation of correctly charged Asn-tRNA(Asn) or Gln-tRNA(Gln) through the transamidation of misacylated Asp-tRNA(Asn) or Glu-tRNA(Gln) in organisms which lack either or both of asparaginyl-tRNA or glutaminyl-tRNA synthetases. The reaction takes place in the presence of glutamine and ATP through an activated phospho-Asp-tRNA(Asn) or phospho-Glu-tRNA(Gln). This Chlorobaculum tepidum (strain ATCC 49652 / DSM 12025 / NBRC 103806 / TLS) (Chlorobium tepidum) protein is Aspartyl/glutamyl-tRNA(Asn/Gln) amidotransferase subunit C.